We begin with the raw amino-acid sequence, 81 residues long: Putative defensin-like protein 148 (81 aa).

An N-terminal signal peptide occupies residues Met-1–Gly-24. Intrachain disulfides connect Cys-34–Cys-80, Cys-43–Cys-63, Cys-48–Cys-74, and Cys-52–Cys-76.

This sequence belongs to the DEFL family.

It is found in the secreted. This chain is Putative defensin-like protein 148 (LCR4), found in Arabidopsis thaliana (Mouse-ear cress).